A 192-amino-acid chain; its full sequence is Nucleoside triphosphate pyrophosphatase (192 aa).

Asp73 functions as the Proton acceptor in the catalytic mechanism.

Belongs to the Maf family. A divalent metal cation serves as cofactor.

Its subcellular location is the cytoplasm. It carries out the reaction a ribonucleoside 5'-triphosphate + H2O = a ribonucleoside 5'-phosphate + diphosphate + H(+). The enzyme catalyses a 2'-deoxyribonucleoside 5'-triphosphate + H2O = a 2'-deoxyribonucleoside 5'-phosphate + diphosphate + H(+). In terms of biological role, nucleoside triphosphate pyrophosphatase. May have a dual role in cell division arrest and in preventing the incorporation of modified nucleotides into cellular nucleic acids. The polypeptide is Nucleoside triphosphate pyrophosphatase (Ehrlichia ruminantium (strain Welgevonden)).